The chain runs to 519 residues: Protein amnionless (519 aa).

A signal peptide spans 1 to 19 (MGAPGRVLLWLQLCALTRA). The Extracellular segment spans residues 20–430 (AYKLWVPNTY…NAPGARSDLM (411 aa)). Residues asparagine 35 and asparagine 39 are each glycosylated (N-linked (GlcNAc...) asparagine). 6 disulfide bridges follow: cysteine 43-cysteine 152, cysteine 193-cysteine 267, cysteine 259-cysteine 265, cysteine 277-cysteine 303, cysteine 288-cysteine 304, and cysteine 293-cysteine 307. Residues 67–143 (SDMEELQDRK…VLASGAGFSA (77 aa)) are interaction with CUBN. The 53-residue stretch at 256-308 (PEACADPSGCVCGNAEVQPWICAALLQPLGGRCPQAACQDALRPEGQCCDLCG) folds into the VWFC domain. The helical transmembrane segment at 431–451 (GGLVAALLLLLLVLLVAALLL) threads the bilayer. The Cytoplasmic segment spans residues 452 to 519 (RRAGRLRWSR…YGEAEAEAEA (68 aa)).

Interacts (via extracellular region) with CUBN/cubilin, giving rise to a huge complex containing one AMN chain and three CUBN chains. N-glycosylated. Post-translationally, a soluble form arises by proteolytic removal of the membrane anchor. As to expression, detected in kidney cortex (at protein level).

It localises to the apical cell membrane. The protein localises to the cell membrane. The protein resides in the endosome membrane. It is found in the membrane. Its subcellular location is the coated pit. Functionally, membrane-bound component of the endocytic receptor formed by AMN and CUBN. Required for normal CUBN glycosylation and trafficking to the cell surface. The complex formed by AMN and CUBN is required for efficient absorption of vitamin B12. Required for normal CUBN-mediated protein transport in the kidney. The protein is Protein amnionless (AMN) of Sus scrofa (Pig).